Consider the following 662-residue polypeptide: UvrABC system protein B (662 aa).

The Helicase ATP-binding domain maps to 31–188 (DNIEGGEKAQ…NDLVDIQFER (158 aa)). An ATP-binding site is contributed by 44-51 (GATGTGKT). Residues 97–120 (YYDYYQPEAYVPSSDTYIEKDSSV) carry the Beta-hairpin motif. In terms of domain architecture, Helicase C-terminal spans 435–601 (QIDDLLGEIN…TIKKEIRDLI (167 aa)). The region spanning 626–661 (KELVKKLEKQMQEAVEVLDFELAAQIRDMMLEVKAL) is the UVR domain.

It belongs to the UvrB family. In terms of assembly, forms a heterotetramer with UvrA during the search for lesions. Interacts with UvrC in an incision complex.

It is found in the cytoplasm. Its function is as follows. The UvrABC repair system catalyzes the recognition and processing of DNA lesions. A damage recognition complex composed of 2 UvrA and 2 UvrB subunits scans DNA for abnormalities. Upon binding of the UvrA(2)B(2) complex to a putative damaged site, the DNA wraps around one UvrB monomer. DNA wrap is dependent on ATP binding by UvrB and probably causes local melting of the DNA helix, facilitating insertion of UvrB beta-hairpin between the DNA strands. Then UvrB probes one DNA strand for the presence of a lesion. If a lesion is found the UvrA subunits dissociate and the UvrB-DNA preincision complex is formed. This complex is subsequently bound by UvrC and the second UvrB is released. If no lesion is found, the DNA wraps around the other UvrB subunit that will check the other stand for damage. The chain is UvrABC system protein B from Streptococcus pneumoniae (strain Hungary19A-6).